Here is a 184-residue protein sequence, read N- to C-terminus: Effector CFEM1 (184 aa).

Residues 1 to 17 form the signal peptide; it reads MKYSVAFVALAAVAAQA. In terms of domain architecture, CFEM spans 18-112; that stretch reads QSLADVPKCA…PTTTAAATST (95 aa). 4 disulfide bridges follow: Cys26–Cys68, Cys30–Cys63, Cys41–Cys48, and Cys50–Cys85. Asp45 lines the heme pocket. Disordered stretches follow at residues 83 to 106 and 136 to 163; these read NLCK…PTTT and IIPT…EQAN. Residues 88–103 are compositionally biased toward basic and acidic residues; sequence PPKESEAKSTAEEEKP. A lipid anchor (GPI-anchor amidated asparagine) is attached at Asn163. A propeptide spans 164 to 184 (removed in mature form); sequence GAAGLKGLGALAMAAFAALAL.

This sequence belongs to the RBT5 family. As to quaternary structure, interacts with Z.mays LRR5; the interaction is direct. Interacts (via CFEM domain) with Z.mays WAK17 isoform 2; the interaction is direct.

The protein localises to the secreted. It localises to the cell wall. The protein resides in the cell membrane. Its subcellular location is the cell septum. It is found in the cytoplasm. Its function is as follows. Suppresses host programmed cell death during infection by binding to Z.mays WAK17 isoform 2 and Z.mays LRR5, to prevent activation of Z.mays WAK17 isoform 1 and the downstream hypersensitive response. In Gibberella zeae (strain ATCC MYA-4620 / CBS 123657 / FGSC 9075 / NRRL 31084 / PH-1) (Wheat head blight fungus), this protein is Effector CFEM1.